The primary structure comprises 291 residues: 4-hydroxy-tetrahydrodipicolinate synthase (291 aa).

Thr44 is a binding site for pyruvate. The active-site Proton donor/acceptor is Tyr132. Lys160 (schiff-base intermediate with substrate) is an active-site residue. Ile202 provides a ligand contact to pyruvate.

The protein belongs to the DapA family. In terms of assembly, homotetramer; dimer of dimers.

Its subcellular location is the cytoplasm. It carries out the reaction L-aspartate 4-semialdehyde + pyruvate = (2S,4S)-4-hydroxy-2,3,4,5-tetrahydrodipicolinate + H2O + H(+). The protein operates within amino-acid biosynthesis; L-lysine biosynthesis via DAP pathway; (S)-tetrahydrodipicolinate from L-aspartate: step 3/4. Functionally, catalyzes the condensation of (S)-aspartate-beta-semialdehyde [(S)-ASA] and pyruvate to 4-hydroxy-tetrahydrodipicolinate (HTPA). The protein is 4-hydroxy-tetrahydrodipicolinate synthase of Roseobacter denitrificans (strain ATCC 33942 / OCh 114) (Erythrobacter sp. (strain OCh 114)).